Reading from the N-terminus, the 154-residue chain is Peptide methionine sulfoxide reductase MsrB (154 aa).

In terms of domain architecture, MsrB spans D28 to I150. Zn(2+) is bound by residues C67, C70, C116, and C119. Residue C139 is the Nucleophile of the active site.

Belongs to the MsrB Met sulfoxide reductase family. Zn(2+) serves as cofactor.

It carries out the reaction L-methionyl-[protein] + [thioredoxin]-disulfide + H2O = L-methionyl-(R)-S-oxide-[protein] + [thioredoxin]-dithiol. The sequence is that of Peptide methionine sulfoxide reductase MsrB from Vibrio vulnificus (strain CMCP6).